We begin with the raw amino-acid sequence, 356 residues long: 3-dehydroquinate synthase (356 aa).

Residues G106–D110, T130–T131, K143, and K152 each bind NAD(+). Residues E185, H248, and H265 each contribute to the Zn(2+) site.

The protein belongs to the sugar phosphate cyclases superfamily. Dehydroquinate synthase family. The cofactor is Co(2+). Zn(2+) is required as a cofactor. It depends on NAD(+) as a cofactor.

It localises to the cytoplasm. The enzyme catalyses 7-phospho-2-dehydro-3-deoxy-D-arabino-heptonate = 3-dehydroquinate + phosphate. The protein operates within metabolic intermediate biosynthesis; chorismate biosynthesis; chorismate from D-erythrose 4-phosphate and phosphoenolpyruvate: step 2/7. Its function is as follows. Catalyzes the conversion of 3-deoxy-D-arabino-heptulosonate 7-phosphate (DAHP) to dehydroquinate (DHQ). This is 3-dehydroquinate synthase from Thermoanaerobacter sp. (strain X514).